A 282-amino-acid polypeptide reads, in one-letter code: 4-diphosphocytidyl-2-C-methyl-D-erythritol kinase (282 aa).

The active site involves lysine 9. An ATP-binding site is contributed by 98 to 108 (PMGGGLGGGSS). The active site involves aspartate 140.

This sequence belongs to the GHMP kinase family. IspE subfamily. In terms of assembly, homodimer.

The enzyme catalyses 4-CDP-2-C-methyl-D-erythritol + ATP = 4-CDP-2-C-methyl-D-erythritol 2-phosphate + ADP + H(+). Its pathway is isoprenoid biosynthesis; isopentenyl diphosphate biosynthesis via DXP pathway; isopentenyl diphosphate from 1-deoxy-D-xylulose 5-phosphate: step 3/6. Functionally, catalyzes the phosphorylation of the position 2 hydroxy group of 4-diphosphocytidyl-2C-methyl-D-erythritol. The protein is 4-diphosphocytidyl-2-C-methyl-D-erythritol kinase of Salmonella paratyphi B (strain ATCC BAA-1250 / SPB7).